Consider the following 495-residue polypeptide: Glutamyl-tRNA(Gln) amidotransferase subunit A (495 aa).

Active-site charge relay system residues include Lys78 and Ser159. The active-site Acyl-ester intermediate is Ser183.

The protein belongs to the amidase family. GatA subfamily. In terms of assembly, heterotrimer of A, B and C subunits.

The catalysed reaction is L-glutamyl-tRNA(Gln) + L-glutamine + ATP + H2O = L-glutaminyl-tRNA(Gln) + L-glutamate + ADP + phosphate + H(+). Its function is as follows. Allows the formation of correctly charged Gln-tRNA(Gln) through the transamidation of misacylated Glu-tRNA(Gln) in organisms which lack glutaminyl-tRNA synthetase. The reaction takes place in the presence of glutamine and ATP through an activated gamma-phospho-Glu-tRNA(Gln). This is Glutamyl-tRNA(Gln) amidotransferase subunit A from Rhizorhabdus wittichii (strain DSM 6014 / CCUG 31198 / JCM 15750 / NBRC 105917 / EY 4224 / RW1) (Sphingomonas wittichii).